A 310-amino-acid polypeptide reads, in one-letter code: Aspartate carbamoyltransferase catalytic subunit (310 aa).

2 residues coordinate carbamoyl phosphate: Arg-59 and Thr-60. Lys-87 lines the L-aspartate pocket. Residues Arg-109, His-137, and Gln-140 each coordinate carbamoyl phosphate. L-aspartate contacts are provided by Arg-170 and Arg-225. 2 residues coordinate carbamoyl phosphate: Gly-266 and Pro-267.

It belongs to the aspartate/ornithine carbamoyltransferase superfamily. ATCase family. Heterododecamer (2C3:3R2) of six catalytic PyrB chains organized as two trimers (C3), and six regulatory PyrI chains organized as three dimers (R2).

The catalysed reaction is carbamoyl phosphate + L-aspartate = N-carbamoyl-L-aspartate + phosphate + H(+). It participates in pyrimidine metabolism; UMP biosynthesis via de novo pathway; (S)-dihydroorotate from bicarbonate: step 2/3. Its function is as follows. Catalyzes the condensation of carbamoyl phosphate and aspartate to form carbamoyl aspartate and inorganic phosphate, the committed step in the de novo pyrimidine nucleotide biosynthesis pathway. This is Aspartate carbamoyltransferase catalytic subunit from Pelobacter propionicus (strain DSM 2379 / NBRC 103807 / OttBd1).